Here is a 146-residue protein sequence, read N- to C-terminus: Large ribosomal subunit protein mL41 (146 aa).

The transit peptide at 1–16 (MKGSPISQFSKTSINA) directs the protein to the mitochondrion.

The protein belongs to the mitochondrion-specific ribosomal protein mL41 family. As to quaternary structure, component of the mitochondrial large ribosomal subunit (mt-LSU). Mature yeast 74S mitochondrial ribosomes consist of a small (37S) and a large (54S) subunit. The 37S small subunit contains a 15S ribosomal RNA (15S mt-rRNA) and 34 different proteins. The 54S large subunit contains a 21S rRNA (21S mt-rRNA) and 46 different proteins.

It is found in the mitochondrion. Component of the mitochondrial ribosome (mitoribosome), a dedicated translation machinery responsible for the synthesis of mitochondrial genome-encoded proteins, including at least some of the essential transmembrane subunits of the mitochondrial respiratory chain. The mitoribosomes are attached to the mitochondrial inner membrane and translation products are cotranslationally integrated into the membrane. This chain is Large ribosomal subunit protein mL41 (MRPL27), found in Saccharomyces cerevisiae (strain ATCC 204508 / S288c) (Baker's yeast).